Consider the following 61-residue polypeptide: Large ribosomal subunit protein uL30 (61 aa).

Belongs to the universal ribosomal protein uL30 family. As to quaternary structure, part of the 50S ribosomal subunit.

The polypeptide is Large ribosomal subunit protein uL30 (Dichelobacter nodosus (strain VCS1703A)).